The chain runs to 399 residues: Elongation factor Tu (399 aa).

In terms of domain architecture, tr-type G spans 10–209 (KPHVNIGTIG…EVDRYIPTPE (200 aa)). The interval 19–26 (GHVDHGKT) is G1. 19 to 26 (GHVDHGKT) lines the GTP pocket. Thr-26 is a binding site for Mg(2+). The G2 stretch occupies residues 60 to 64 (GITIA). The interval 81–84 (DCPG) is G3. GTP is bound by residues 81–85 (DCPGH) and 136–139 (NKED). The tract at residues 136–139 (NKED) is G4. The G5 stretch occupies residues 174-176 (SAL).

This sequence belongs to the TRAFAC class translation factor GTPase superfamily. Classic translation factor GTPase family. EF-Tu/EF-1A subfamily. As to quaternary structure, monomer.

The protein localises to the cytoplasm. The enzyme catalyses GTP + H2O = GDP + phosphate + H(+). Its function is as follows. GTP hydrolase that promotes the GTP-dependent binding of aminoacyl-tRNA to the A-site of ribosomes during protein biosynthesis. The chain is Elongation factor Tu from Wolinella succinogenes (strain ATCC 29543 / DSM 1740 / CCUG 13145 / JCM 31913 / LMG 7466 / NCTC 11488 / FDC 602W) (Vibrio succinogenes).